We begin with the raw amino-acid sequence, 298 residues long: Ribose-phosphate pyrophosphokinase (298 aa).

ATP contacts are provided by residues 33–35 and 91–92; these read DGE and RQ. Mg(2+) is bound by residues His125 and Asp164. Lys187 is an active-site residue. D-ribose 5-phosphate contacts are provided by Arg189 and Asp224.

It belongs to the ribose-phosphate pyrophosphokinase family. Class III (archaeal) subfamily. Mg(2+) serves as cofactor.

It is found in the cytoplasm. It carries out the reaction D-ribose 5-phosphate + ATP = 5-phospho-alpha-D-ribose 1-diphosphate + AMP + H(+). It functions in the pathway metabolic intermediate biosynthesis; 5-phospho-alpha-D-ribose 1-diphosphate biosynthesis; 5-phospho-alpha-D-ribose 1-diphosphate from D-ribose 5-phosphate (route I): step 1/1. In terms of biological role, involved in the biosynthesis of the central metabolite phospho-alpha-D-ribosyl-1-pyrophosphate (PRPP) via the transfer of pyrophosphoryl group from ATP to 1-hydroxyl of ribose-5-phosphate (Rib-5-P). The protein is Ribose-phosphate pyrophosphokinase of Methanobrevibacter smithii (strain ATCC 35061 / DSM 861 / OCM 144 / PS).